The primary structure comprises 179 residues: Large ribosomal subunit protein uL6 (179 aa).

The protein belongs to the universal ribosomal protein uL6 family. In terms of assembly, part of the 50S ribosomal subunit.

Functionally, this protein binds to the 23S rRNA, and is important in its secondary structure. It is located near the subunit interface in the base of the L7/L12 stalk, and near the tRNA binding site of the peptidyltransferase center. In Bacillus velezensis (strain DSM 23117 / BGSC 10A6 / LMG 26770 / FZB42) (Bacillus amyloliquefaciens subsp. plantarum), this protein is Large ribosomal subunit protein uL6.